Consider the following 447-residue polypeptide: N-succinylarginine dihydrolase (447 aa).

Substrate-binding positions include 19–28, N110, and 137–138; these read AGLSFGNEAS and HR. E174 is an active-site residue. Residue R212 coordinates substrate. Residue H248 is part of the active site. 2 residues coordinate substrate: D250 and N359. C365 functions as the Nucleophile in the catalytic mechanism.

This sequence belongs to the succinylarginine dihydrolase family. Homodimer.

It catalyses the reaction N(2)-succinyl-L-arginine + 2 H2O + 2 H(+) = N(2)-succinyl-L-ornithine + 2 NH4(+) + CO2. It participates in amino-acid degradation; L-arginine degradation via AST pathway; L-glutamate and succinate from L-arginine: step 2/5. Its function is as follows. Catalyzes the hydrolysis of N(2)-succinylarginine into N(2)-succinylornithine, ammonia and CO(2). In Escherichia coli (strain SE11), this protein is N-succinylarginine dihydrolase.